Consider the following 689-residue polypeptide: Probable serine/threonine-protein kinase abkC (689 aa).

The disordered stretch occupies residues 42-79 (NNSGNENYKNFNYNYKNKNNYNNNNNNNNSNSSSNNNG). The 433-residue stretch at 257–689 (WFDEEPMASG…NNKNNNEKNK (433 aa)) folds into the Protein kinase domain. Residues 263 to 271 (MASGSVAQV) and lysine 285 contribute to the ATP site. The active-site Proton acceptor is aspartate 417. The tract at residues 652–689 (KQLNNDNNNNNNNNNNNKNNNDNNNKNNNNKNNNEKNK) is disordered. A compositionally biased stretch (low complexity) spans 655–683 (NNDNNNNNNNNNNNKNNNDNNNKNNNNKN).

This sequence belongs to the protein kinase superfamily. ADCK protein kinase family.

This Dictyostelium discoideum (Social amoeba) protein is Probable serine/threonine-protein kinase abkC (abkC).